A 456-amino-acid polypeptide reads, in one-letter code: MESNNKLKRGLSTRHIRFMALGSAIGTGLFYGSADAIKMAGPSVLLAYIIGGVAAYIIMRALGEMSVHNPAASSFSRYAQENLGPLAGYITGWTYCFEILIVAIADVTAFGIYMGVWFPAVPHWIWVLSVVLIICAINLMSVKVFGELEFWFSFFKVATIIIMIVAGIGIIVWGIGNGGQPTGIHNLWSNGGFFSNGWLGMIMSLQMVMFAYGGIEIIGITAGEAKDPEKSIPRAINSVPMRILVFYVGTLFVIMSIYPWNQVGTNGSPFVLTFQHMGITFAASILNFVVLTASLSAINSDVFGVGRMLHGMAEQGSAPKVFAKTSRRGIPWVTVLVMTIALLFAVYLNYIMPENVFLVIASLATFATVWVWIMILLSQIAFRRRLPPEEVKALKFKVPGGVVTTIAGLIFLVFIIALIGYHPDTRISLYVGFAWIVLLLIGWIFKRRRDRQLAQA.

The Cytoplasmic portion of the chain corresponds to 1–17; sequence MESNNKLKRGLSTRHIR. The next 2 helical transmembrane spans lie at 18–38 and 39–59; these read FMAL…DAIK and MAGP…YIIM. Residues 60 to 95 lie on the Cytoplasmic side of the membrane; that stretch reads RALGEMSVHNPAASSFSRYAQENLGPLAGYITGWTY. 2 helical membrane passes run 96-116 and 117-137; these read CFEI…YMGV and WFPA…ICAI. Topologically, residues 138-156 are cytoplasmic; sequence NLMSVKVFGELEFWFSFFK. A helical membrane pass occupies residues 157–177; the sequence is VATIIIMIVAGIGIIVWGIGN. Topologically, residues 178 to 197 are periplasmic; the sequence is GGQPTGIHNLWSNGGFFSNG. Residues 198 to 218 traverse the membrane as a helical segment; the sequence is WLGMIMSLQMVMFAYGGIEII. Topologically, residues 219–242 are cytoplasmic; it reads GITAGEAKDPEKSIPRAINSVPMR. A helical membrane pass occupies residues 243 to 263; the sequence is ILVFYVGTLFVIMSIYPWNQV. Topologically, residues 264–277 are periplasmic; that stretch reads GTNGSPFVLTFQHM. A helical transmembrane segment spans residues 278-298; that stretch reads GITFAASILNFVVLTASLSAI. At 299–331 the chain is on the cytoplasmic side; that stretch reads NSDVFGVGRMLHGMAEQGSAPKVFAKTSRRGIP. The helical transmembrane segment at 332–352 threads the bilayer; that stretch reads WVTVLVMTIALLFAVYLNYIM. At 353–355 the chain is on the periplasmic side; it reads PEN. A helical membrane pass occupies residues 356–376; sequence VFLVIASLATFATVWVWIMIL. Over 377 to 399 the chain is Cytoplasmic; the sequence is LSQIAFRRRLPPEEVKALKFKVP. Residues 400-420 form a helical membrane-spanning segment; it reads GGVVTTIAGLIFLVFIIALIG. Over 421 to 424 the chain is Periplasmic; it reads YHPD. The helical transmembrane segment at 425–445 threads the bilayer; sequence TRISLYVGFAWIVLLLIGWIF. At 446–456 the chain is on the cytoplasmic side; it reads KRRRDRQLAQA.

It belongs to the amino acid-polyamine-organocation (APC) superfamily. Amino acid transporter (AAT) (TC 2.A.3.1) family.

Its subcellular location is the cell inner membrane. Functionally, permease that is involved in the transport across the cytoplasmic membrane of proline. This is Proline-specific permease ProY (proY) from Salmonella typhimurium (strain LT2 / SGSC1412 / ATCC 700720).